Here is a 630-residue protein sequence, read N- to C-terminus: Phosphatidylinositol 4-kinase gamma 5 (630 aa).

Residues 41–98 (RRVFVQTETGCVLGLELDRSDNAHTVKRKLQVALNFPIEESSLTFGDLVLKNDLTAVR) enclose the Ubiquitin-like; degenerate domain. Residues 162–459 (GIDPVAVNSG…LIGEKDAESP (298 aa)) enclose the PI3K/PI4K catalytic domain. The interval 168 to 174 (VNSGLGG) is G-loop. Residues 169-175 (NSGLGGA), Lys190, and 279-282 (QQFI) each bind ATP. Residues 312–320 (LNTDRHSGN) form a catalytic loop region. The activation loop stretch occupies residues 339-365 (PIDHGLCLPETLEDPYFEWIHWPQASI). Position 341 (Asp341) interacts with ATP. Positions 500–527 (LSKVEETTEDGEEEEEEDREEEENDRAD) are disordered. Over residues 506-524 (TTEDGEEEEEEDREEEEND) the composition is skewed to acidic residues. Ser571 carries the post-translational modification Phosphoserine.

This sequence belongs to the PI3/PI4-kinase family. Type II PI4K subfamily. As to quaternary structure, interacts with AHK2.

The catalysed reaction is a 1,2-diacyl-sn-glycero-3-phospho-(1D-myo-inositol) + ATP = a 1,2-diacyl-sn-glycero-3-phospho-(1D-myo-inositol 4-phosphate) + ADP + H(+). The phosphorylation of phosphatidylinositol (PI) to PI4P is the first committed step in the generation of phosphatidylinositol 4,5-bisphosphate (PIP2), a precursor of the second messenger inositol 1,4,5-trisphosphate (InsP3). The protein is Phosphatidylinositol 4-kinase gamma 5 (PI4KG5) of Arabidopsis thaliana (Mouse-ear cress).